The primary structure comprises 46 residues: Mu-segestritoxin-Sf1c (46 aa).

Disulfide bonds link cysteine 3/cysteine 19, cysteine 10/cysteine 22, cysteine 18/cysteine 42, and cysteine 24/cysteine 40. Positions 31–33 (RPW) are keys region for toxin activity.

Belongs to the neurotoxin 16 (SFI) family. As to expression, expressed by the venom gland.

The protein localises to the secreted. In terms of biological role, insecticidal toxin. It inhibits insect voltage-gated sodium channels (Nav) by partially blocking the channel pore in DUM neurons from the American cockroach, not by acting as a gating modifier. The inhibition is only partially reversible after prolonged washout. In vivo, the toxin causes flaccid paralysis followed by death when injected into Heliothis virescens larvae. It also causes uncoordinated movements followed by full paralysis to sheep blowflies (Lucilia cuprina). When the toxin is fused to snowdrop lectin, it is orally active against larvae of the tomato moth (Laconobia oleracea), the rice brown planthopper (Nilaparvata lugens), and the peach-potato aphid (Myzus persicae). This is Mu-segestritoxin-Sf1c from Segestria florentina (Tube-web spider).